Here is a 179-residue protein sequence, read N- to C-terminus: Segregation and condensation protein B (179 aa).

Belongs to the ScpB family. As to quaternary structure, homodimer. Homodimerization may be required to stabilize the binding of ScpA to the Smc head domains. Component of a cohesin-like complex composed of ScpA, ScpB and the Smc homodimer, in which ScpA and ScpB bind to the head domain of Smc. The presence of the three proteins is required for the association of the complex with DNA.

It localises to the cytoplasm. Its function is as follows. Participates in chromosomal partition during cell division. May act via the formation of a condensin-like complex containing Smc and ScpA that pull DNA away from mid-cell into both cell halves. The polypeptide is Segregation and condensation protein B (Clostridioides difficile (strain 630) (Peptoclostridium difficile)).